The sequence spans 339 residues: Probable protein phosphatase 2C 28 (339 aa).

A PPM-type phosphatase domain is found at D87 to F334. Mn(2+) is bound by residues D124, G125, D286, and D325.

This sequence belongs to the PP2C family. The cofactor is Mg(2+). Mn(2+) is required as a cofactor.

The enzyme catalyses O-phospho-L-seryl-[protein] + H2O = L-seryl-[protein] + phosphate. It carries out the reaction O-phospho-L-threonyl-[protein] + H2O = L-threonyl-[protein] + phosphate. This Arabidopsis thaliana (Mouse-ear cress) protein is Probable protein phosphatase 2C 28.